A 130-amino-acid polypeptide reads, in one-letter code: Putative F-box protein At1g77880 (130 aa).

Positions 18–64 constitute an F-box domain; the sequence is KVSIPYLPDDLLLNCLARISRLYYPTLSLVSKRFRSLLASTELYETR.

This is Putative F-box protein At1g77880 from Arabidopsis thaliana (Mouse-ear cress).